Here is a 119-residue protein sequence, read N- to C-terminus: Large ribosomal subunit protein bL20 (119 aa).

It belongs to the bacterial ribosomal protein bL20 family.

Binds directly to 23S ribosomal RNA and is necessary for the in vitro assembly process of the 50S ribosomal subunit. It is not involved in the protein synthesizing functions of that subunit. The chain is Large ribosomal subunit protein bL20 from Aromatoleum aromaticum (strain DSM 19018 / LMG 30748 / EbN1) (Azoarcus sp. (strain EbN1)).